We begin with the raw amino-acid sequence, 493 residues long: Glutamyl-tRNA(Gln) amidotransferase subunit A (493 aa).

Active-site charge relay system residues include Lys78 and Ser158. The active-site Acyl-ester intermediate is the Ser182.

This sequence belongs to the amidase family. GatA subfamily. As to quaternary structure, heterotrimer of A, B and C subunits.

The enzyme catalyses L-glutamyl-tRNA(Gln) + L-glutamine + ATP + H2O = L-glutaminyl-tRNA(Gln) + L-glutamate + ADP + phosphate + H(+). Its function is as follows. Allows the formation of correctly charged Gln-tRNA(Gln) through the transamidation of misacylated Glu-tRNA(Gln) in organisms which lack glutaminyl-tRNA synthetase. The reaction takes place in the presence of glutamine and ATP through an activated gamma-phospho-Glu-tRNA(Gln). The polypeptide is Glutamyl-tRNA(Gln) amidotransferase subunit A (Rickettsia felis (strain ATCC VR-1525 / URRWXCal2) (Rickettsia azadi)).